Reading from the N-terminus, the 129-residue chain is Glycine cleavage system H protein (129 aa).

A Lipoyl-binding domain is found at 24–106 (SYTVGITEHA…YGEGWFFRVM (83 aa)). Residue lysine 65 is modified to N6-lipoyllysine.

The protein belongs to the GcvH family. As to quaternary structure, the glycine cleavage system is composed of four proteins: P, T, L and H. (R)-lipoate serves as cofactor.

In terms of biological role, the glycine cleavage system catalyzes the degradation of glycine. The H protein shuttles the methylamine group of glycine from the P protein to the T protein. The chain is Glycine cleavage system H protein from Shewanella putrefaciens (strain CN-32 / ATCC BAA-453).